The sequence spans 192 residues: 7-methyl-GTP pyrophosphatase (192 aa).

Asp-69 acts as the Proton acceptor in catalysis.

The protein belongs to the Maf family. YceF subfamily. A divalent metal cation serves as cofactor.

Its subcellular location is the cytoplasm. The catalysed reaction is N(7)-methyl-GTP + H2O = N(7)-methyl-GMP + diphosphate + H(+). Functionally, nucleoside triphosphate pyrophosphatase that hydrolyzes 7-methyl-GTP (m(7)GTP). May have a dual role in cell division arrest and in preventing the incorporation of modified nucleotides into cellular nucleic acids. The protein is 7-methyl-GTP pyrophosphatase of Pseudomonas fluorescens (strain ATCC BAA-477 / NRRL B-23932 / Pf-5).